Consider the following 347-residue polypeptide: Selenide, water dikinase (347 aa).

Cysteine 17 is a catalytic residue. Residues lysine 20 and 48–50 (TRD) each bind ATP. Mg(2+) is bound at residue aspartate 51. ATP is bound by residues aspartate 68, aspartate 91, and 139-141 (GHS). Position 91 (aspartate 91) interacts with Mg(2+). Residue aspartate 227 coordinates Mg(2+).

It belongs to the selenophosphate synthase 1 family. Class I subfamily. As to quaternary structure, homodimer. It depends on Mg(2+) as a cofactor.

The enzyme catalyses hydrogenselenide + ATP + H2O = selenophosphate + AMP + phosphate + 2 H(+). In terms of biological role, synthesizes selenophosphate from selenide and ATP. This is Selenide, water dikinase from Salmonella typhimurium (strain LT2 / SGSC1412 / ATCC 700720).